A 646-amino-acid polypeptide reads, in one-letter code: Serine/threonine-protein kinase max-2 (646 aa).

The disordered stretch occupies residues 19–40 (FSPSDKDKDRDDEMKPSSSAMD). Basic and acidic residues predominate over residues 22 to 33 (SDKDKDRDDEMK). The CRIB domain occupies 41 to 54 (ISQPYNTVHRVHVG). Positions 136–345 (LQCSNGSATS…PPPPEEPPVR (210 aa)) are disordered. Low complexity-rich tracts occupy residues 142–157 (SATS…SSSA) and 167–180 (LSTA…LSLS). Residues 196–205 (SAPQLKTFTG) show a composition bias toward polar residues. Residues 214–223 (SPFPPQPPVL) are compositionally biased toward pro residues. Residues 229–245 (TASAVATTTTNPTTSNG) are compositionally biased toward low complexity. Pro residues predominate over residues 246–262 (APPPVPGSKGPPVPPKP). Low complexity-rich tracts occupy residues 273 to 307 (SSGC…DGDV) and 323 to 334 (KNGNTTTNKTTV). One can recognise a Protein kinase domain in the interval 376 to 627 (YEMKKQIGVG…TTELLAHPFL (252 aa)). ATP contacts are provided by residues 382-390 (IGVGASGTV) and K405. Residue D496 is the Proton acceptor of the active site.

Belongs to the protein kinase superfamily. STE Ser/Thr protein kinase family. STE20 subfamily. Interacts with mlk-1; the interaction is independent of max-2 and mlk-1 kinase activities. Interacts with mig-2 (GTP-bound form). Requires Mg(2+) as cofactor.

It localises to the perikaryon. Its subcellular location is the cell projection. The protein localises to the dendrite. The protein resides in the cytoplasm. The enzyme catalyses L-seryl-[protein] + ATP = O-phospho-L-seryl-[protein] + ADP + H(+). It carries out the reaction L-threonyl-[protein] + ATP = O-phospho-L-threonyl-[protein] + ADP + H(+). Serine/threonine-protein kinase, which phosphorylates mlk-1. Involved in the stress response to heavy metals by activating the mlk-1/mek-1/kgb-1 pathway. In ventral cord commissural motoneurons, required for dorsal axon guidance downstream of unc-6/netrin repulsion receptor unc-5 and probably of Rho GTPases ced-10 and mig-2. Plays a redundant role with mig-10 in orientating axonal growth of HSN neurons. Plays a redundant role with pak-1 in P neuroblast migration and in distal tip cell (DTC)-mediated guidance of gonad elongation probably downstream of Rho GTPases. In association with pak-2, plays a role in embryogenesis. In association with pak-1, may be involved in spermatogenesis. The protein is Serine/threonine-protein kinase max-2 of Caenorhabditis elegans.